We begin with the raw amino-acid sequence, 155 residues long: Small ribosomal subunit protein uS7 (155 aa).

This sequence belongs to the universal ribosomal protein uS7 family. Part of the 30S ribosomal subunit. Contacts proteins S9 and S11.

Its function is as follows. One of the primary rRNA binding proteins, it binds directly to 16S rRNA where it nucleates assembly of the head domain of the 30S subunit. Is located at the subunit interface close to the decoding center, probably blocks exit of the E-site tRNA. This chain is Small ribosomal subunit protein uS7, found in Xanthomonas campestris pv. campestris (strain 8004).